We begin with the raw amino-acid sequence, 142 residues long: Ribosomal RNA large subunit methyltransferase H (142 aa).

The S-adenosyl-L-methionine site is built by L55 and G87.

It belongs to the RNA methyltransferase RlmH family. Homodimer.

The protein localises to the cytoplasm. The catalysed reaction is pseudouridine(1915) in 23S rRNA + S-adenosyl-L-methionine = N(3)-methylpseudouridine(1915) in 23S rRNA + S-adenosyl-L-homocysteine + H(+). Functionally, specifically methylates the pseudouridine at position 1915 (m3Psi1915) in 23S rRNA. The protein is Ribosomal RNA large subunit methyltransferase H of Sphingopyxis alaskensis (strain DSM 13593 / LMG 18877 / RB2256) (Sphingomonas alaskensis).